Reading from the N-terminus, the 179-residue chain is Putative DUP240 protein DFP1 (179 aa).

Helical transmembrane passes span 4-24 (FLLF…SGVL) and 26-46 (PAMV…IWSF).

Belongs to the DUP/COS family.

It is found in the membrane. This chain is Putative DUP240 protein DFP1, found in Saccharomyces cerevisiae (strain ATCC 204508 / S288c) (Baker's yeast).